Reading from the N-terminus, the 330-residue chain is (4-{4-[2-(gamma-L-glutamylamino)ethyl]phenoxymethyl}furan-2-yl)methanamine synthase (330 aa).

Belongs to the MfnF family.

The catalysed reaction is gamma-L-glutamyltyramine + [5-(aminomethyl)furan-3-yl]methyl diphosphate = (4-{4-[2-(gamma-L-glutamylamino)ethyl]phenoxymethyl}furan-2-yl)methanamine + diphosphate. Its pathway is cofactor biosynthesis; methanofuran biosynthesis. Functionally, catalyzes the condensation between 5-(aminomethyl)-3-furanmethanol diphosphate (F1-PP) and gamma-glutamyltyramine to produce APMF-Glu. The sequence is that of (4-{4-[2-(gamma-L-glutamylamino)ethyl]phenoxymethyl}furan-2-yl)methanamine synthase from Methanocaldococcus jannaschii (strain ATCC 43067 / DSM 2661 / JAL-1 / JCM 10045 / NBRC 100440) (Methanococcus jannaschii).